We begin with the raw amino-acid sequence, 467 residues long: MSDDTTQIEPAMAQETSPRANTRKVFVKTYGCQMNVYDSQRMADSLAAEGYVATDTPDDADLVLLNTCHIREKASEKLYSALGRLRKMKDARAADGKELTIGVAGCVAQAEGQEILRRAPNVDLVIGPQTYHRLPNALARVRGGEKVVETDYAIEDKFEHLPAPRREETRKRGVSAFLTVQEGCDKFCTFCVVPYTRGSEVSRSVKQIVAEAERLADSGVRELTLLGQNVNAWHGEGEDGREWGLGELLFRLARIPGIAHLRYTTSHPRDMDDSLIAAHRDLRQLMPYLHLPVQSGSDRILKAMNRRHKADEYLRLIERIRNVRPDMALSGDFIVGFPGETDQDFEDTMQLVRDVNYAQAYSFKYSPRPGTPGADLDDHVEEAVKDERLQRLQALLSAQQYAFQDSMIGRKMDVLLEKPGREAGQMVGRSPWLLPVIIDDNKDRVGDIIHVKIVSTGTNSLIAQKLA.

The segment at 1–20 (MSDDTTQIEPAMAQETSPRA) is disordered. Residues 23–143 (RKVFVKTYGC…LPNALARVRG (121 aa)) enclose the MTTase N-terminal domain. Cysteine 32, cysteine 68, cysteine 106, cysteine 184, cysteine 188, and cysteine 191 together coordinate [4Fe-4S] cluster. In terms of domain architecture, Radical SAM core spans 170 to 402 (RKRGVSAFLT…QALLSAQQYA (233 aa)). A TRAM domain is found at 405–467 (DSMIGRKMDV…TNSLIAQKLA (63 aa)).

It belongs to the methylthiotransferase family. MiaB subfamily. As to quaternary structure, monomer. The cofactor is [4Fe-4S] cluster.

It localises to the cytoplasm. The catalysed reaction is N(6)-dimethylallyladenosine(37) in tRNA + (sulfur carrier)-SH + AH2 + 2 S-adenosyl-L-methionine = 2-methylsulfanyl-N(6)-dimethylallyladenosine(37) in tRNA + (sulfur carrier)-H + 5'-deoxyadenosine + L-methionine + A + S-adenosyl-L-homocysteine + 2 H(+). In terms of biological role, catalyzes the methylthiolation of N6-(dimethylallyl)adenosine (i(6)A), leading to the formation of 2-methylthio-N6-(dimethylallyl)adenosine (ms(2)i(6)A) at position 37 in tRNAs that read codons beginning with uridine. The protein is tRNA-2-methylthio-N(6)-dimethylallyladenosine synthase of Brucella melitensis biotype 1 (strain ATCC 23456 / CCUG 17765 / NCTC 10094 / 16M).